The chain runs to 212 residues: Redox-sensing transcriptional repressor Rex (212 aa).

The H-T-H motif DNA-binding region spans 17 to 56 (KYHRYLQELMENDIDRISSKELSEKIGFTASQIRQDLNCF). 91–96 (GAGNIG) lines the NAD(+) pocket.

It belongs to the transcriptional regulatory Rex family. In terms of assembly, homodimer.

The protein localises to the cytoplasm. Functionally, modulates transcription in response to changes in cellular NADH/NAD(+) redox state. This Clostridium perfringens (strain SM101 / Type A) protein is Redox-sensing transcriptional repressor Rex.